We begin with the raw amino-acid sequence, 377 residues long: uncharacterized protein (377 aa).

The next 2 helical transmembrane spans lie at 71-91 (IIAT…LVGS) and 140-160 (AEAA…PTLF).

The protein localises to the membrane. This is an uncharacterized protein from Coxiella burnetii (strain RSA 493 / Nine Mile phase I).